Here is a 151-residue protein sequence, read N- to C-terminus: UPF0208 membrane protein YfbV (151 aa).

The next 2 helical transmembrane spans lie at 46-65 and 69-91; these read YAIR…QIAL and LGPA…WWLG.

This sequence belongs to the UPF0208 family.

Its subcellular location is the cell inner membrane. In Escherichia coli O1:K1 / APEC, this protein is UPF0208 membrane protein YfbV.